The following is a 95-amino-acid chain: LTFSTRSLLNLPAVEWKSGAKYTCTASHSPSQSTVKRVIRNPKESPKGSSETRKSPLEIMESPEDYGTEEDQLENVNEDSNSSLSIMTFVILFIL.

The 36-residue stretch at 1–36 (LTFSTRSLLNLPAVEWKSGAKYTCTASHSPSQSTVK) folds into the Ig-like domain. Polar residues predominate over residues 24–35 (CTASHSPSQSTV). Residues 24 to 79 (CTASHSPSQSTVKRVIRNPKESPKGSSETRKSPLEIMESPEDYGTEEDQLENVNED) form a disordered region. Over residues 41–56 (NPKESPKGSSETRKSP) the composition is skewed to basic and acidic residues. A compositionally biased stretch (acidic residues) spans 61–77 (ESPEDYGTEEDQLENVN). Residue Asn81 is glycosylated (N-linked (GlcNAc...) asparagine).

In terms of tissue distribution, expressed mainly in lymphoid tissues including spleen, epigonal organ and circulating lymphocytes. Also expressed at low levels in the pancreas.

This chain is IgNAR transmembrane form NE, found in Ginglymostoma cirratum (Nurse shark).